A 635-amino-acid chain; its full sequence is Biosynthetic arginine decarboxylase (635 aa).

Lys103 is modified (N6-(pyridoxal phosphate)lysine). Position 283 to 293 (283 to 293) interacts with substrate; that stretch reads FDVGGGLGVDY.

This sequence belongs to the Orn/Lys/Arg decarboxylase class-II family. SpeA subfamily. Mg(2+) serves as cofactor. Requires pyridoxal 5'-phosphate as cofactor.

The enzyme catalyses L-arginine + H(+) = agmatine + CO2. It functions in the pathway amine and polyamine biosynthesis; agmatine biosynthesis; agmatine from L-arginine: step 1/1. Its function is as follows. Catalyzes the biosynthesis of agmatine from arginine. In Proteus mirabilis (strain HI4320), this protein is Biosynthetic arginine decarboxylase.